Here is a 315-residue protein sequence, read N- to C-terminus: Probable carboxylesterase 3 (315 aa).

Met-1 bears the N-acetylmethionine mark. Positions 81–83 (HGG) match the Involved in the stabilization of the negatively charged intermediate by the formation of the oxyanion hole motif. Catalysis depends on residues Ser-160, Asp-258, and His-290.

Belongs to the 'GDXG' lipolytic enzyme family. Expressed in flowers and siliques.

It carries out the reaction a carboxylic ester + H2O = an alcohol + a carboxylate + H(+). Functionally, carboxylesterase acting on esters with varying acyl chain length. This chain is Probable carboxylesterase 3 (CXE3), found in Arabidopsis thaliana (Mouse-ear cress).